The chain runs to 255 residues: Complement C1q-like protein 3 (255 aa).

The N-terminal stretch at 1–20 (MVLLLVILIPVLVSSAGTSA) is a signal peptide. The tract at residues 39-109 (KAPSTAATPD…GLPGPPGAPG (71 aa)) is disordered. Residues 61 to 111 (GPKGEAGRPGKAGPRGPPGEPGPPGPVGPPGEKGEPGRQGLPGPPGAPGLN) enclose the Collagen-like domain. Pro residues predominate over residues 75-89 (RGPPGEPGPPGPVGP). Residues 122–255 (STVPKIAFYA…TFSGFIIYAD (134 aa)) enclose the C1q domain.

In terms of assembly, forms homooligomers. Interacts with ADGRB3. Forms heterooligomers with C1QL2 and C1QL4, when proteins are coexpressed; this interaction does not occur after secretion. As to expression, highly expressed in brain and white adipose tissue. In gonadal fat pad, expressed at lower levels in adipocytes than in the stromal vascular fraction (VSP), which contains preadipocytes, fibroblasts, endothelial cells and occasional immune cells. Expression exhibits sexually dimorphism, with higher levels in females than in males (at protein level). Tends to be up-regulated in adipose tissue from obese males, but not females. Expressed in glial cells.

The protein localises to the secreted. May regulate the number of excitatory synapses that are formed on hippocampus neurons. Has no effect on inhibitory synapses. Plays a role in glucose homeostasis. Via AMPK signaling pathway, stimulates glucose uptake in adipocytes, myotubes and hepatocytes and enhances insulin-stimulated glucose uptake. In a hepatoma cell line, reduces the expression of gluconeogenic enzymes G6PC1 and PCK1 and hence decreases de novo glucose production. The sequence is that of Complement C1q-like protein 3 (C1ql3) from Mus musculus (Mouse).